The primary structure comprises 444 residues: Methylenetetrahydrofolate--tRNA-(uracil-5-)-methyltransferase TrmFO (444 aa).

9–14 (GAGLAG) is a binding site for FAD.

This sequence belongs to the MnmG family. TrmFO subfamily. FAD serves as cofactor.

It is found in the cytoplasm. The catalysed reaction is uridine(54) in tRNA + (6R)-5,10-methylene-5,6,7,8-tetrahydrofolate + NADH + H(+) = 5-methyluridine(54) in tRNA + (6S)-5,6,7,8-tetrahydrofolate + NAD(+). It catalyses the reaction uridine(54) in tRNA + (6R)-5,10-methylene-5,6,7,8-tetrahydrofolate + NADPH + H(+) = 5-methyluridine(54) in tRNA + (6S)-5,6,7,8-tetrahydrofolate + NADP(+). Catalyzes the folate-dependent formation of 5-methyl-uridine at position 54 (M-5-U54) in all tRNAs. This chain is Methylenetetrahydrofolate--tRNA-(uracil-5-)-methyltransferase TrmFO, found in Koribacter versatilis (strain Ellin345).